The sequence spans 291 residues: N-acetylmannosamine kinase (291 aa).

ATP-binding positions include 5 to 12 and 132 to 139; these read AIDIGGTK and GVGGGVVS. Zn(2+)-binding residues include histidine 156, cysteine 166, cysteine 168, and cysteine 173.

The protein belongs to the ROK (NagC/XylR) family. NanK subfamily. Homodimer.

It catalyses the reaction an N-acyl-D-mannosamine + ATP = an N-acyl-D-mannosamine 6-phosphate + ADP + H(+). The protein operates within amino-sugar metabolism; N-acetylneuraminate degradation; D-fructose 6-phosphate from N-acetylneuraminate: step 2/5. Functionally, catalyzes the phosphorylation of N-acetylmannosamine (ManNAc) to ManNAc-6-P. In Escherichia coli (strain 55989 / EAEC), this protein is N-acetylmannosamine kinase.